A 724-amino-acid chain; its full sequence is Hyaluronan mediated motility receptor (724 aa).

2 disordered regions span residues 1 to 22 (MSFPKAPLKRFNDPSGCAPSPG) and 40 to 81 (KSQR…QKND). Position 20 is a phosphoserine (serine 20). 2 stretches are compositionally biased toward basic and acidic residues: residues 46–60 (QQKESKQNLNVDKDT) and 70–81 (KSSESKESQKND). Asparagine 133, asparagine 477, asparagine 567, and asparagine 588 each carry an N-linked (GlcNAc...) asparagine glycan. Residues 365 to 546 (EEMVKEKNLF…ITDLQNQLKQ (182 aa)) form a required for interaction with FAM83D region. 2 hyaluronic acid-binding regions span residues 635-645 (KQKIKHVVKLK) and 657-666 (KLRCQLAKKK). Threonine 703 carries the phosphothreonine modification.

In terms of assembly, interacts with ANKRD26. Interacts with DYNLL1. Interacts with FAM83D/CHICA. As to expression, expressed in testis. Expressed in the breast.

It localises to the cell surface. The protein resides in the cytoplasm. It is found in the cytoskeleton. The protein localises to the spindle. Functionally, receptor for hyaluronic acid (HA). Involved in cell motility. When hyaluronan binds to HMMR, the phosphorylation of a number of proteins, including PTK2/FAK1 occurs. May also be involved in cellular transformation and metastasis formation, and in regulating extracellular-regulated kinase (ERK) activity. May act as a regulator of adipogenisis. This chain is Hyaluronan mediated motility receptor (HMMR), found in Homo sapiens (Human).